Here is a 128-residue protein sequence, read N- to C-terminus: Entry-fusion complex protein OPG094 (128 aa).

Topologically, residues 1–30 (MENVPNVYFNPVFIEPTFKHSLLSVYKHRL) are intravirion. A helical; Signal-anchor for type III membrane protein membrane pass occupies residues 31 to 51 (IVLFEVFVVFILIYVFFRSEL). The Virion surface segment spans residues 52–128 (NMFFMPKRKI…PVSLNDVLRR (77 aa)). The cysteines at positions 75 and 107 are disulfide-linked.

Belongs to the orthopoxvirus OPG099 family. As to quaternary structure, interacts with OPG086. Component of the entry fusion complex (EFC) composed of OPG053, OPG076, OPG086, OPG094, OPG095, OPG099, OPG107, OPG143, OPG104J5, OPG147 and OPG155. Except for OPG095 and OPG053, each of the EFC proteins is required for assembly or stability of the complex. In terms of processing, most cysteines are linked by disulfide bonds. They are created by the viral disulfide bond formation pathway, a poxvirus-specific redox pathway that operates on the cytoplasmic side of the MV membranes. Post-translationally, unglycosylated because produced in viral factories instead of the classic ER -Golgi route.

It is found in the virion membrane. Functionally, component of the entry fusion complex (EFC), which consists of 11 proteins. During cell infection, this complex mediates entry of the virion core into the host cytoplasm by a two-step mechanism consisting of lipid mixing of the viral and cellular membranes and subsequent pore formation. The protein is Entry-fusion complex protein OPG094 (OPG099) of Cynomys gunnisoni (Gunnison's prairie dog).